A 771-amino-acid polypeptide reads, in one-letter code: MADDGLLLNFAIPDTTVLRPEKTKVKGGTWRDRLSAKKIAAHRTNNPRKEKSASNGEQNSNPRNPNRIQVSGPRPVKRQRIEDDDGNGGSQPRQQQQQHPGAPRQFVSSLFSKNPRPRNAVEEKNEAGAEVEDAKPTNAPLIDGLDTFTNLGLSAPLAAHLLTKLEVKAPTAIQKASITQLLKEESDAFIQAETGSGKTMAYLLPLVQRIMTISLNQKKREEGEQVQRDSGLFAIVLAPTRELCKQIAVVLEGLLRCAHWIVAGTVIGGEKKKSEKARLRKGLNILVATPGRLADHLENTQALDVSNVRWLVLDEGDRLMELGFEKELAGIIQKLDARQRPSRIPGIPAKRTTILCSATLKMTVQKLGEISLKDAVHIQADPADEDGEPRKKDEDDAFRVPAQLKQSYAIVASKLRLVTLTAFMKRTFMRKGSVMKAIIFVSCADSVDFHFEVFTRKNGDEEEKKEESEDSDEEDAEEKRKKLGASAHGTIAPATAFSNPSNPVALHRLHGSLPQHVRTATLGAFARNREPSVLICTDVASRGLDLPNVDLVVEYDPAFSAEDHLHRIGRTARLGRDGRALIFLMPGCEEGYVDILKKGYRDGGKALTRNSADDILKRGFGGNVESQNVDWEEKATEWQLDVERWALENKNYLEMARRAYQSHIRAYATHIANERSMFNIKELHLGHLAKSFALRDRPSKINVPGLRQAQADTKKDFKADRKPVAGKKRKAGGHDDDDDDVPRQTDTLTAAQKMRAKMKEHMAGASEFNLA.

A compositionally biased stretch (basic and acidic residues) spans 23 to 35 (TKVKGGTWRDRLS). The tract at residues 23-139 (TKVKGGTWRD…EVEDAKPTNA (117 aa)) is disordered. The segment covering 53 to 69 (ASNGEQNSNPRNPNRIQ) has biased composition (polar residues). Low complexity predominate over residues 90 to 105 (SQPRQQQQQHPGAPRQ). A compositionally biased stretch (basic and acidic residues) spans 119 to 135 (NAVEEKNEAGAEVEDAK). Residues 146-175 (DTFTNLGLSAPLAAHLLTKLEVKAPTAIQK) carry the Q motif motif. Positions 179–378 (TQLLKEESDA…EISLKDAVHI (200 aa)) constitute a Helicase ATP-binding domain. An ATP-binding site is contributed by 192–199 (AETGSGKT). Residues 314–317 (DEGD) carry the DEAD box motif. In terms of domain architecture, Helicase C-terminal spans 403-615 (QLKQSYAIVA…ALTRNSADDI (213 aa)). 2 disordered regions span residues 458–485 (NGDEEEKKEESEDSDEEDAEEKRKKLGA) and 703–771 (VPGL…FNLA). The segment covering 460–476 (DEEEKKEESEDSDEEDA) has biased composition (acidic residues). The span at 712–723 (DTKKDFKADRKP) shows a compositional bias: basic and acidic residues.

The protein belongs to the DEAD box helicase family. DDX31/DBP7 subfamily.

The protein resides in the nucleus. It localises to the nucleolus. It carries out the reaction ATP + H2O = ADP + phosphate + H(+). Functionally, ATP-binding RNA helicase involved in the biogenesis of 60S ribosomal subunits and is required for the normal formation of 25S and 5.8S rRNAs. The sequence is that of ATP-dependent RNA helicase dbp7 (dbp7) from Aspergillus niger (strain ATCC MYA-4892 / CBS 513.88 / FGSC A1513).